We begin with the raw amino-acid sequence, 201 residues long: Calcium channel flower (201 aa).

3 helical membrane passes run 37–57, 59–79, and 103–120; these read LGIV…LSII, LSVS…VVMA, and PMYF…PPIF.

Belongs to the calcium channel flower family. In terms of assembly, homomultimer. Associates with the dally/ magu complex.

Its subcellular location is the cell membrane. It is found in the cytoplasmic vesicle. The protein resides in the secretory vesicle. The protein localises to the synaptic vesicle membrane. It localises to the presynaptic cell membrane. Its subcellular location is the endosome. Its activity is regulated as follows. Channel activity is inhibited by La(3+), which reduces Ca(2+) influx and thus inhibits it's function in promoting activity-dependent bulk endocytosis (ADBE) in response to high stimuli. Its function is as follows. Transmembrane protein which mediates synaptic endocytosis, fitness-based cell culling, neuronal culling, morphogen gradient scaling, and calcium transport. Regulates synaptic endocytosis and hence couples exo- with endocytosis. Controls two major modes of synaptic vesicle (SV) endocytosis in the synaptic boutons of neuromuscular junctions (NMJs); Ca(2+) channel-independent Clathrin-mediated endocytosis (CME) in response to mild stimulation, and Ca(2+) channel-dependent activity-dependent bulk endocytosis (ADBE) in response to strong stimulation. Functions in ADBE and subsequent SV reformation from bulk endosomes by initiating Ca(2+) channel-dependent phosphatidylinositol 4,5-bisphosphate (PtdIns(4,5)P2) compartmentalization in synaptic boutons. There it acts at the periactive zone to provide the low Ca(2+) levels required to initiate Calcineurin activation and upregulate PtdIns(4,5)P2. Conversely PtdIns(4,5)P2 enhances fwe Ca(2+) channel-activity, establishing a positive feedback loop that induces PtdIns(4,5)P2 microdomain at the periactive zone. These microdomains trigger bulk membrane invagination (i.e. ADBE) by triggering actin polymerization while also promoting localization of fwe to bulk endosomes, thereby removing the ADBE trigger to reduce endocytosis and prevent excess membrane uptake. PtdIns(4,5)P2 then promotes SV reformation from the bulk endosomes, to coordinate ADBE and subsequent SV reformation. Different combinations of the flower isoforms at the cell membrane are also required for the identification and elimination of suboptimal or supernumerary cells during development, regeneration, and adulthood. Required for the recognition and elimination of unfit cells in the developing wing during cell competition. In the developing pupal retina, mediates the elimination of unwanted postmitotic neurons, including supernumerary photoreceptor neurons that form at the periphery of the retina and are contained within incomplete ommatidia units. Also required for efficient elimination and replacement of old neurons by newly generated neurons during regeneration in the adult brain following mechanical injury. Downstream of the flower fitness fingerprints, cells identified as unwanted or unfit are eliminated via apoptosis through the expression of ahuizotl (azot). However, the cells marked for elimination by the flower isoforms only undergo apoptosis if additional thresholds are met; (1) their neighboring fit/healthy cells express different levels of the fwe isoforms, and (2) the levels of the protective signal SPARC expressed by the loser or unwanted cells are unable to inhibit caspase activation. These additional thresholds for flower-mediated apoptosis, allows useful cells to recover from transient and limited stress before they are unnecessarily eliminated. Functions with dally and magu in a mechanism of scaling, which utilises apoptosis to ensure that the dpp morphogen gradient, which mediates organ growth, remains proportional to the size of the growing wing. In this mechanism, fwe represses dally- and Magu-dependent activity in expanding the gradient, and dally/Magu inhibits fwe-dependent apoptosis to keep cell death rate low. When the levels of these different proteins are optimally regulated the gradient correctly scales with organ growth but when this fails, fwe-mediated apoptosis is activated to trim the developing tissue to match the correct size of the gradient. This chain is Calcium channel flower, found in Drosophila willistoni (Fruit fly).